The primary structure comprises 590 residues: Aspartate--tRNA(Asp/Asn) ligase (590 aa).

Glu-175 contacts L-aspartate. The interval 199–202 (QQYK) is aspartate. Arg-221 and His-450 together coordinate L-aspartate. 221-223 (RDE) lines the ATP pocket. Residue Glu-484 coordinates ATP. Arg-491 lines the L-aspartate pocket. Residue 536–539 (GVDR) coordinates ATP.

It belongs to the class-II aminoacyl-tRNA synthetase family. Type 1 subfamily. As to quaternary structure, homodimer.

The protein resides in the cytoplasm. It catalyses the reaction tRNA(Asx) + L-aspartate + ATP = L-aspartyl-tRNA(Asx) + AMP + diphosphate. Functionally, aspartyl-tRNA synthetase with relaxed tRNA specificity since it is able to aspartylate not only its cognate tRNA(Asp) but also tRNA(Asn). Reaction proceeds in two steps: L-aspartate is first activated by ATP to form Asp-AMP and then transferred to the acceptor end of tRNA(Asp/Asn). In Bradyrhizobium sp. (strain ORS 278), this protein is Aspartate--tRNA(Asp/Asn) ligase.